Reading from the N-terminus, the 588-residue chain is Aspartate--tRNA(Asp/Asn) ligase (588 aa).

L-aspartate is bound at residue Glu172. The aspartate stretch occupies residues 196 to 199 (QLFK). Arg218 is a binding site for L-aspartate. ATP-binding positions include 218-220 (RDE) and Gln227. Residue His450 coordinates L-aspartate. Residue Glu484 participates in ATP binding. Residue Arg491 participates in L-aspartate binding. An ATP-binding site is contributed by 536–539 (GLDR).

It belongs to the class-II aminoacyl-tRNA synthetase family. Type 1 subfamily. Homodimer.

The protein resides in the cytoplasm. It catalyses the reaction tRNA(Asx) + L-aspartate + ATP = L-aspartyl-tRNA(Asx) + AMP + diphosphate. In terms of biological role, aspartyl-tRNA synthetase with relaxed tRNA specificity since it is able to aspartylate not only its cognate tRNA(Asp) but also tRNA(Asn). Reaction proceeds in two steps: L-aspartate is first activated by ATP to form Asp-AMP and then transferred to the acceptor end of tRNA(Asp/Asn). The sequence is that of Aspartate--tRNA(Asp/Asn) ligase from Nitrosospira multiformis (strain ATCC 25196 / NCIMB 11849 / C 71).